Consider the following 55-residue polypeptide: UPF0434 protein BPEN_388 (55 aa).

The protein belongs to the UPF0434 family.

The polypeptide is UPF0434 protein BPEN_388 (Blochmanniella pennsylvanica (strain BPEN)).